The sequence spans 335 residues: Holliday junction branch migration complex subunit RuvB (335 aa).

The large ATPase domain (RuvB-L) stretch occupies residues 2 to 184 (ADERIVSAEN…FGIVEHMAYY (183 aa)). Residues Leu-23, Arg-24, Gly-65, Lys-68, Thr-69, Thr-70, 131–133 (EDF), Arg-174, Tyr-184, and Arg-221 contribute to the ATP site. Thr-69 contributes to the Mg(2+) binding site. The interval 185-255 (TEADLMDIVQ…IADHALSQLQ (71 aa)) is small ATPAse domain (RuvB-S). The segment at 258 to 335 (IRGLDGVDRK…AHLGMPYPEK (78 aa)) is head domain (RuvB-H). Residues Arg-313 and Arg-318 each coordinate DNA.

It belongs to the RuvB family. Homohexamer. Forms an RuvA(8)-RuvB(12)-Holliday junction (HJ) complex. HJ DNA is sandwiched between 2 RuvA tetramers; dsDNA enters through RuvA and exits via RuvB. An RuvB hexamer assembles on each DNA strand where it exits the tetramer. Each RuvB hexamer is contacted by two RuvA subunits (via domain III) on 2 adjacent RuvB subunits; this complex drives branch migration. In the full resolvosome a probable DNA-RuvA(4)-RuvB(12)-RuvC(2) complex forms which resolves the HJ.

The protein resides in the cytoplasm. It carries out the reaction ATP + H2O = ADP + phosphate + H(+). Functionally, the RuvA-RuvB-RuvC complex processes Holliday junction (HJ) DNA during genetic recombination and DNA repair, while the RuvA-RuvB complex plays an important role in the rescue of blocked DNA replication forks via replication fork reversal (RFR). RuvA specifically binds to HJ cruciform DNA, conferring on it an open structure. The RuvB hexamer acts as an ATP-dependent pump, pulling dsDNA into and through the RuvAB complex. RuvB forms 2 homohexamers on either side of HJ DNA bound by 1 or 2 RuvA tetramers; 4 subunits per hexamer contact DNA at a time. Coordinated motions by a converter formed by DNA-disengaged RuvB subunits stimulates ATP hydrolysis and nucleotide exchange. Immobilization of the converter enables RuvB to convert the ATP-contained energy into a lever motion, pulling 2 nucleotides of DNA out of the RuvA tetramer per ATP hydrolyzed, thus driving DNA branch migration. The RuvB motors rotate together with the DNA substrate, which together with the progressing nucleotide cycle form the mechanistic basis for DNA recombination by continuous HJ branch migration. Branch migration allows RuvC to scan DNA until it finds its consensus sequence, where it cleaves and resolves cruciform DNA. The polypeptide is Holliday junction branch migration complex subunit RuvB (Latilactobacillus sakei subsp. sakei (strain 23K) (Lactobacillus sakei subsp. sakei)).